Here is a 206-residue protein sequence, read N- to C-terminus: Ribosomal RNA large subunit methyltransferase E (206 aa).

Residues glycine 60, tryptophan 62, aspartate 80, aspartate 96, and aspartate 121 each contribute to the S-adenosyl-L-methionine site. The Proton acceptor role is filled by lysine 161.

Belongs to the class I-like SAM-binding methyltransferase superfamily. RNA methyltransferase RlmE family.

Its subcellular location is the cytoplasm. The catalysed reaction is uridine(2552) in 23S rRNA + S-adenosyl-L-methionine = 2'-O-methyluridine(2552) in 23S rRNA + S-adenosyl-L-homocysteine + H(+). In terms of biological role, specifically methylates the uridine in position 2552 of 23S rRNA at the 2'-O position of the ribose in the fully assembled 50S ribosomal subunit. This chain is Ribosomal RNA large subunit methyltransferase E, found in Legionella pneumophila (strain Lens).